Consider the following 109-residue polypeptide: UPF0060 membrane protein PSPA7_1846 (109 aa).

Transmembrane regions (helical) follow at residues Leu-5–Leu-25, Leu-27–Leu-47, Ala-59–Glu-79, and Leu-84–Gly-104.

Belongs to the UPF0060 family.

The protein resides in the cell inner membrane. The chain is UPF0060 membrane protein PSPA7_1846 from Pseudomonas paraeruginosa (strain DSM 24068 / PA7) (Pseudomonas aeruginosa (strain PA7)).